The sequence spans 547 residues: Nuclear speckle splicing regulatory protein 1 (547 aa).

The interval 25–51 is disordered; sequence KPSVFGNDSDDDEASVSESLQREAAKK. Phosphoserine is present on residues serine 27 and serine 33. Positions 103–177 form a coiled coil; that stretch reads IHNLLKAVEI…EARLDVTKQK (75 aa). Residues 105-169 are necessary for alternative splicing activity; sequence NLLKAVEIRK…REKRAAALEA (65 aa). Residues 188-523 are disordered; the sequence is NQAVGEEAVP…KRSNEETVMS (336 aa). Glycyl lysine isopeptide (Lys-Gly) (interchain with G-Cter in SUMO2) cross-links involve residues lysine 198 and lysine 209. A compositionally biased stretch (basic and acidic residues) spans 200–217; that stretch reads SFREARTVIKEEKLRGYP. The span at 223 to 232 shows a compositional bias: polar residues; it reads ENRPQQNCAL. A compositionally biased stretch (acidic residues) spans 237 to 254; that stretch reads EEAEENPDADSDSEESCD. Phosphoserine is present on residues serine 247 and serine 252. Positions 255-269 are enriched in basic and acidic residues; that stretch reads DGERGDHKVKSRGEE. Position 276 is an N6-acetyllysine (lysine 276). Residues 277-287 are compositionally biased toward basic residues; that stretch reads YLKHHKNHTHS. Residue lysine 279 forms a Glycyl lysine isopeptide (Lys-Gly) (interchain with G-Cter in SUMO2) linkage. The span at 308–339 shows a compositional bias: basic and acidic residues; sequence RGHEHKGGQHQDRQSRDQESCHKDRSHREEKS. Basic residues predominate over residues 340 to 355; that stretch reads SHRHREASHKDHHWKR. Basic and acidic residues-rich tracts occupy residues 356–480 and 490–506; these read HEHE…KPPR and RLTE…ERPP. Positions 376-417 form a coiled coil; that stretch reads KREKYSSREQEKDRQWNDHDRYSEKEKKGKEKEEHRKARRER. At serine 447 the chain carries Phosphoserine.

This sequence belongs to the NSRP1 family. Interacts (via C-terminus) with SRSF1. Interacts (via C-terminus) with SRSF2.

It is found in the nucleus. Its subcellular location is the nucleus speckle. Its function is as follows. RNA-binding protein that mediates pre-mRNA alternative splicing regulation. The chain is Nuclear speckle splicing regulatory protein 1 (Nsrp1) from Rattus norvegicus (Rat).